A 239-amino-acid chain; its full sequence is Ribose-5-phosphate isomerase A (239 aa).

Residues 30–33 (SGST), 87–90 (DGAD), and 100–103 (KGGG) contribute to the substrate site. Glu-109 serves as the catalytic Proton acceptor. Substrate is bound at residue Lys-127.

It belongs to the ribose 5-phosphate isomerase family. Homodimer.

It catalyses the reaction aldehydo-D-ribose 5-phosphate = D-ribulose 5-phosphate. It participates in carbohydrate degradation; pentose phosphate pathway; D-ribose 5-phosphate from D-ribulose 5-phosphate (non-oxidative stage): step 1/1. Its function is as follows. Catalyzes the reversible conversion of ribose-5-phosphate to ribulose 5-phosphate. This Synechococcus sp. (strain CC9605) protein is Ribose-5-phosphate isomerase A.